The sequence spans 1216 residues: AF4/FMR2 family member 1 (1216 aa).

Disordered regions lie at residues 1-52 (MAAH…KGDE), 68-104 (KEFL…GAAS), 116-139 (IHTS…AQPR), 152-217 (PRLT…VSSK), 244-275 (AVTS…MQQK), and 352-728 (SWPP…RTSG). Composition is skewed to basic and acidic residues over residues 9–35 (NEDR…EAFP) and 78–99 (HRLD…HDRG). Positions 166–182 (RKCDRRAEGDSAPERKL) are enriched in basic and acidic residues. A phosphoserine mark is found at Ser-183, Ser-191, and Ser-197. Positions 207–217 (SKAHSSGVSSK) are enriched in low complexity. A compositionally biased stretch (pro residues) spans 252-266 (PPQPPCQTFPPPPLP). The span at 383 to 406 (PATQSQKQYDTPSKTHPNPQQGTS) shows a compositional bias: polar residues. Residues 408–424 (LEDDLQLSDSEDSDTEQ) show a composition bias toward acidic residues. Pro residues predominate over residues 429–438 (PPSPPAPPSA). The span at 457-484 (ESSESDSSSDSESESSSSDSEEEEENEP) shows a compositional bias: acidic residues. Lys-682 carries the post-translational modification N6-acetyllysine. Residues 710–728 (SQGPSHSSRGSSGSVRTSG) show a composition bias toward low complexity. Ser-755 and Ser-760 each carry phosphoserine. Disordered stretches follow at residues 777–969 (RIPQ…RQQA) and 1094–1125 (APSP…QSSA). The segment covering 789–808 (RKAEDKQLSAGKKQDSETKS) has biased composition (basic and acidic residues). Low complexity-rich tracts occupy residues 824–846 (KKST…SSHT), 867–886 (PPAS…PSRP), 902–915 (PPRS…SSTD), and 1115–1125 (PASSVGSQSSA).

The protein belongs to the AF4 family. As to quaternary structure, component of the super elongation complex (SEC), at least composed of EAF1, EAF2, CDK9, MLLT3/AF9, AFF (AFF1 or AFF4), the P-TEFb complex and ELL (ELL, ELL2 or ELL3).

The protein resides in the nucleus. The protein is AF4/FMR2 family member 1 (Aff1) of Mus musculus (Mouse).